A 549-amino-acid chain; its full sequence is Glucose-6-phosphate isomerase (549 aa).

The active-site Proton donor is Glu353. Residues His384 and Lys513 contribute to the active site.

The protein belongs to the GPI family.

It localises to the cytoplasm. It catalyses the reaction alpha-D-glucose 6-phosphate = beta-D-fructose 6-phosphate. Its pathway is carbohydrate biosynthesis; gluconeogenesis. It functions in the pathway carbohydrate degradation; glycolysis; D-glyceraldehyde 3-phosphate and glycerone phosphate from D-glucose: step 2/4. Its function is as follows. Catalyzes the reversible isomerization of glucose-6-phosphate to fructose-6-phosphate. The polypeptide is Glucose-6-phosphate isomerase (Brucella ovis (strain ATCC 25840 / 63/290 / NCTC 10512)).